Reading from the N-terminus, the 301-residue chain is Putative S-adenosyl-L-methionine-dependent methyltransferase BCG_0775c (301 aa).

S-adenosyl-L-methionine is bound by residues D130 and 159-160 (DL).

It belongs to the UPF0677 family.

Exhibits S-adenosyl-L-methionine-dependent methyltransferase activity. The protein is Putative S-adenosyl-L-methionine-dependent methyltransferase BCG_0775c of Mycobacterium bovis (strain BCG / Pasteur 1173P2).